The following is a 783-amino-acid chain: LPS-assembly protein LptD (783 aa).

Positions 1-24 are cleaved as a signal peptide; sequence MSCFSRTFLAASISAALFAPQIQA.

It belongs to the LptD family. In terms of assembly, component of the lipopolysaccharide transport and assembly complex. Interacts with LptE and LptA.

The protein localises to the cell outer membrane. In terms of biological role, together with LptE, is involved in the assembly of lipopolysaccharide (LPS) at the surface of the outer membrane. The polypeptide is LPS-assembly protein LptD (Vibrio cholerae serotype O1 (strain ATCC 39315 / El Tor Inaba N16961)).